Consider the following 353-residue polypeptide: Phosphate acyltransferase (353 aa).

The protein belongs to the PlsX family. As to quaternary structure, homodimer. Probably interacts with PlsY.

It is found in the cytoplasm. The catalysed reaction is a fatty acyl-[ACP] + phosphate = an acyl phosphate + holo-[ACP]. It functions in the pathway lipid metabolism; phospholipid metabolism. In terms of biological role, catalyzes the reversible formation of acyl-phosphate (acyl-PO(4)) from acyl-[acyl-carrier-protein] (acyl-ACP). This enzyme utilizes acyl-ACP as fatty acyl donor, but not acyl-CoA. The chain is Phosphate acyltransferase from Nitrosospira multiformis (strain ATCC 25196 / NCIMB 11849 / C 71).